The sequence spans 253 residues: MSDPINEHANEPASFPIKEHFQLKETIVTIAADNLAHIEAAKEAIRIHRAALETYIFSDPYFQLTLEPYECPENAPEVVRRMVKAGNTMGIGPMSAVAGTISALAVESMVKAGAKYAIVDNGGDIALINDRPVVVGIYAGQSTIKNLGLVFEPRGSITGVCTSAGTVGPSISFGMADAAAVFSDDVSLADAAATALGNEVNIGKESVEASFKAVKGIPEIKGALVIQGEYIGMWGQVPRVTRADVRYEYITKA.

It belongs to the UPF0280 family.

This is UPF0280 protein Mbar_A3697 from Methanosarcina barkeri (strain Fusaro / DSM 804).